A 203-amino-acid chain; its full sequence is MPYIPMPYVVEQTHRGERSYDIYSRLLKDRIIFLGTPVDDDVANVIIAQLLFLESEDPDKDINLYINSPGGSVTSGLAIYDTMQYVKPQVSTICLGQAASMGAFLLAGGAAGKRFAVPNARIMIHQLSGGFQGQATDIEIQAKEALRLKAKLNEIMARHTRQPIERIERDTERDYFMSAGEAKEYGLIDDVFLHKKAADKKPQ.

The Nucleophile role is filled by Ser100. His125 is a catalytic residue.

The protein belongs to the peptidase S14 family. In terms of assembly, fourteen ClpP subunits assemble into 2 heptameric rings which stack back to back to give a disk-like structure with a central cavity, resembling the structure of eukaryotic proteasomes.

The protein localises to the cytoplasm. It catalyses the reaction Hydrolysis of proteins to small peptides in the presence of ATP and magnesium. alpha-casein is the usual test substrate. In the absence of ATP, only oligopeptides shorter than five residues are hydrolyzed (such as succinyl-Leu-Tyr-|-NHMec, and Leu-Tyr-Leu-|-Tyr-Trp, in which cleavage of the -Tyr-|-Leu- and -Tyr-|-Trp bonds also occurs).. In terms of biological role, cleaves peptides in various proteins in a process that requires ATP hydrolysis. Has a chymotrypsin-like activity. Plays a major role in the degradation of misfolded proteins. The polypeptide is ATP-dependent Clp protease proteolytic subunit (Anaeromyxobacter dehalogenans (strain 2CP-1 / ATCC BAA-258)).